We begin with the raw amino-acid sequence, 418 residues long: Protease LasA (418 aa).

A signal peptide spans 1 to 31 (MQHKRSRAMASPRSPFLFVLLALAVGGTANA). Positions 32-236 (HDDGLPAFRY…ARQLQAKAAL (205 aa)) are excised as a propeptide. Residues histidine 259 and aspartate 272 each coordinate Zn(2+). An intrachain disulfide couples cysteine 301 to cysteine 347. Catalysis depends on proton donor/acceptor residues histidine 317 and histidine 356. Histidine 358 contacts Zn(2+). Cysteine 391 and cysteine 406 are joined by a disulfide.

Belongs to the peptidase M23A family. It depends on Zn(2+) as a cofactor. In terms of processing, processing of pro-LasA can occur extracellularly and requires elastase (lasB). Secretion and processing may be linked.

The protein localises to the secreted. Functionally, involved in proteolysis and elastolysis (degradation of the host protein elastin). Has staphylolytic activity (degrades pentaglycine cross-links in cell wall peptidoglycan), preferring Gly-Gly-|-X substrates where X is Ala or Gly. Enhances the elastolytic but not proteolytic activity of elastase (lasB) and elastolytic activity of other proteases. Degradation of host elastin is likely to contribute to the pathogenicity of P.aeruginosa. While either His-317 or His-356 can abstract a proton in the hydrolysis reaction, the same residue performs both functions in a given catalytic cycle, with the other stabilizing the catalytic intermediate. This is Protease LasA (lasA) from Pseudomonas aeruginosa (strain ATCC 15692 / DSM 22644 / CIP 104116 / JCM 14847 / LMG 12228 / 1C / PRS 101 / PAO1).